A 66-amino-acid polypeptide reads, in one-letter code: Large ribosomal subunit protein bL35 (66 aa).

Basic residues predominate over residues 1 to 26 (MPKMKTHRGAAKRVKRTASGKLKRSR). Residues 1 to 49 (MPKMKTHRGAAKRVKRTASGKLKRSRAFTSHLFANKSTKQKRKLRKASL) are disordered.

It belongs to the bacterial ribosomal protein bL35 family.

This is Large ribosomal subunit protein bL35 from Staphylococcus carnosus (strain TM300).